Reading from the N-terminus, the 48-residue chain is Large ribosomal subunit protein bL33A (48 aa).

The protein belongs to the bacterial ribosomal protein bL33 family.

The protein is Large ribosomal subunit protein bL33A of Bacillus anthracis.